We begin with the raw amino-acid sequence, 280 residues long: Bifunctional protein FolD (280 aa).

Residues 164-166 (GRS), S189, and V230 contribute to the NADP(+) site.

It belongs to the tetrahydrofolate dehydrogenase/cyclohydrolase family. As to quaternary structure, homodimer.

The catalysed reaction is (6R)-5,10-methylene-5,6,7,8-tetrahydrofolate + NADP(+) = (6R)-5,10-methenyltetrahydrofolate + NADPH. It catalyses the reaction (6R)-5,10-methenyltetrahydrofolate + H2O = (6R)-10-formyltetrahydrofolate + H(+). It functions in the pathway one-carbon metabolism; tetrahydrofolate interconversion. Its function is as follows. Catalyzes the oxidation of 5,10-methylenetetrahydrofolate to 5,10-methenyltetrahydrofolate and then the hydrolysis of 5,10-methenyltetrahydrofolate to 10-formyltetrahydrofolate. The chain is Bifunctional protein FolD from Geotalea uraniireducens (strain Rf4) (Geobacter uraniireducens).